The chain runs to 198 residues: Crinkler effector protein BLC01 (198 aa).

An N-terminal signal peptide occupies residues 1-15; it reads MMVKLICAIVDIAGA. Residues 16-55 form an LQLFLAK domain region; the sequence is AFPIDIDTNELVGDFKKVIKAENSRTIACDANDLRLFLAK. Residues 56-113 are DWL domain; that stretch reads TDGRWLTEFEVQNGVADISVFEELDVVGAPLNMIGLSEETVSSVAITKELVKAKKTPL. The HVLVXXP motif motif lies at 114 to 119; sequence HVLVVP.

The protein belongs to the Crinkler effector family.

The protein localises to the secreted. It localises to the host cell. In terms of biological role, secreted effector that elicits necrosis in host plants, a characteristic of plant innate immunity. This is Crinkler effector protein BLC01 from Bremia lactucae (Lettuce downy mildew).